The chain runs to 76 residues: Protein OPG128 (76 aa).

Cysteine 17 and cysteine 21 are oxidised to a cystine.

This sequence belongs to the orthopoxvirus OPG128 family. As to quaternary structure, interacts with sulfhydryl oxidase OPG072; this interaction involves formation of a transient disulfide-bonded intermediate, allowing disulfide bond transfer. Interacts with OPG088; this interaction involves formation of a transient disulfide-bonded intermediate, allowing disulfide bond transfer.

Late protein which probably participates in disulfide bond formation by functioning as a thiol-disulfide transfer protein between membrane-associated OPG072 and OPG08. The complete pathway for formation of disulfide bonds in intracellular virion membrane proteins sequentially involves oxidation of OPG072, OPG128 and OPG08. In Variola virus (isolate Human/India/Ind3/1967) (VARV), this protein is Protein OPG128 (OPG128).